The primary structure comprises 501 residues: Ectoine/hydroxyectoine transporter (501 aa).

12 helical membrane passes run 9-29, 45-65, 86-106, 137-157, 190-210, 220-240, 258-278, 311-331, 343-363, 395-415, 441-461, and 465-485; these read PVFY…ATLP, IHFG…LITL, FFTW…VFWG, AFFH…LVIA, LAVI…ILQM, VPTS…TYLI, LGSL…VFIL, WTIF…AFIA, VLGV…AFGG, LPMT…FLVT, IVWG…GGLE, and TASL…MASF.

Belongs to the BCCT transporter (TC 2.A.15) family.

The protein resides in the cell inner membrane. Functionally, mediates the import of ectoine and hydroxyectoine, which function as osmotic and cold stress protectants. Also has minor uptake activities for the compatible solutes proline and glycine betaine. In Virgibacillus pantothenticus, this protein is Ectoine/hydroxyectoine transporter.